Consider the following 300-residue polypeptide: tRNA dimethylallyltransferase 1 (300 aa).

An ATP-binding site is contributed by 10 to 17 (GPTGVGKT). 12-17 (TGVGKT) contributes to the substrate binding site. The interaction with substrate tRNA stretch occupies residues 35-38 (DSRQ).

This sequence belongs to the IPP transferase family. As to quaternary structure, monomer. Mg(2+) is required as a cofactor.

It catalyses the reaction adenosine(37) in tRNA + dimethylallyl diphosphate = N(6)-dimethylallyladenosine(37) in tRNA + diphosphate. In terms of biological role, catalyzes the transfer of a dimethylallyl group onto the adenine at position 37 in tRNAs that read codons beginning with uridine, leading to the formation of N6-(dimethylallyl)adenosine (i(6)A). In Phocaeicola vulgatus (strain ATCC 8482 / DSM 1447 / JCM 5826 / CCUG 4940 / NBRC 14291 / NCTC 11154) (Bacteroides vulgatus), this protein is tRNA dimethylallyltransferase 1.